The chain runs to 156 residues: 6,7-dimethyl-8-ribityllumazine synthase (156 aa).

5-amino-6-(D-ribitylamino)uracil contacts are provided by residues Phe25, 59–61 (AFE), and 83–85 (AVI). 88-89 (AT) is a (2S)-2-hydroxy-3-oxobutyl phosphate binding site. Residue His91 is the Proton donor of the active site. Phe116 contributes to the 5-amino-6-(D-ribitylamino)uracil binding site. Arg130 provides a ligand contact to (2S)-2-hydroxy-3-oxobutyl phosphate.

This sequence belongs to the DMRL synthase family.

It carries out the reaction (2S)-2-hydroxy-3-oxobutyl phosphate + 5-amino-6-(D-ribitylamino)uracil = 6,7-dimethyl-8-(1-D-ribityl)lumazine + phosphate + 2 H2O + H(+). It participates in cofactor biosynthesis; riboflavin biosynthesis; riboflavin from 2-hydroxy-3-oxobutyl phosphate and 5-amino-6-(D-ribitylamino)uracil: step 1/2. Catalyzes the formation of 6,7-dimethyl-8-ribityllumazine by condensation of 5-amino-6-(D-ribitylamino)uracil with 3,4-dihydroxy-2-butanone 4-phosphate. This is the penultimate step in the biosynthesis of riboflavin. This chain is 6,7-dimethyl-8-ribityllumazine synthase, found in Nitratidesulfovibrio vulgaris (strain ATCC 29579 / DSM 644 / CCUG 34227 / NCIMB 8303 / VKM B-1760 / Hildenborough) (Desulfovibrio vulgaris).